The sequence spans 149 residues: MTTTYFGPWLIRQSEIFFTTELSFALVNLKPVLPGHVLVCPKRIVPRVKDLTKEEFTDLWLSAQRISSVVEEHFNGDGITFAIQDGKNAGQTVEHVHIHIIPRKKFDFENNDQIYNEIEKEREPRSYEEMEKESSELRPLFEENKNKTF.

The 115-residue stretch at 1–115 (MTTTYFGPWL…FDFENNDQIY (115 aa)) folds into the HIT domain. Substrate-binding positions include N28, Q84, and 90 to 93 (GQTV). Residues 95-99 (HVHIH) carry the Histidine triad motif motif. The Tele-AMP-histidine intermediate role is filled by H97. Substrate is bound at residue H99. Residues 120 to 149 (KEREPRSYEEMEKESSELRPLFEENKNKTF) form a disordered region.

In terms of assembly, homodimer. The cofactor is Mg(2+). Requires Mn(2+) as cofactor.

Its subcellular location is the cytoplasm. It carries out the reaction P(1),P(3)-bis(5'-adenosyl) triphosphate + H2O = AMP + ADP + 2 H(+). Functionally, cleaves P(1)-P(3)-bis(5'-adenosyl) triphosphate (Ap3A) to yield AMP and ADP. Can also hydrolyze P(1)-P(4)-bis(5'-adenosyl) tetraphosphate (Ap4A), but has extremely low activity with ATP. Modulates transcriptional activation by CTNNB1 and thereby contributes to regulate the expression of genes essential for cell proliferation and survival. Plays a role in the induction of apoptosis via p53/TP53, SRC and AKT1 signaling pathways. Induction of apoptosis depends on the ability of FHIT to bind P(1)-P(3)-bis(5'-adenosyl) triphosphate or related compounds, but does not require its catalytic activity. This is Bis(5'-adenosyl)-triphosphatase (fhit) from Dictyostelium discoideum (Social amoeba).